The chain runs to 254 residues: Alcohol dehydrogenase (254 aa).

Phenylalanine 10–leucine 33 is a binding site for NAD(+). Serine 138 is a substrate binding site. Tyrosine 151 (proton acceptor) is an active-site residue.

This sequence belongs to the short-chain dehydrogenases/reductases (SDR) family. Homodimer.

It carries out the reaction a primary alcohol + NAD(+) = an aldehyde + NADH + H(+). The catalysed reaction is a secondary alcohol + NAD(+) = a ketone + NADH + H(+). This chain is Alcohol dehydrogenase (Adh), found in Drosophila planitibia (Fruit fly).